The primary structure comprises 255 residues: Ribosomal RNA small subunit methyltransferase A (255 aa).

S-adenosyl-L-methionine-binding residues include asparagine 12, leucine 14, glycine 39, glutamate 60, aspartate 84, and asparagine 102.

This sequence belongs to the class I-like SAM-binding methyltransferase superfamily. rRNA adenine N(6)-methyltransferase family. RsmA subfamily.

Its subcellular location is the cytoplasm. The catalysed reaction is adenosine(1518)/adenosine(1519) in 16S rRNA + 4 S-adenosyl-L-methionine = N(6)-dimethyladenosine(1518)/N(6)-dimethyladenosine(1519) in 16S rRNA + 4 S-adenosyl-L-homocysteine + 4 H(+). Specifically dimethylates two adjacent adenosines (A1518 and A1519) in the loop of a conserved hairpin near the 3'-end of 16S rRNA in the 30S particle. May play a critical role in biogenesis of 30S subunits. The sequence is that of Ribosomal RNA small subunit methyltransferase A from Methylobacillus flagellatus (strain ATCC 51484 / DSM 6875 / VKM B-1610 / KT).